An 86-amino-acid chain; its full sequence is Kappa-theraphotoxin-Cg1a 1 (86 aa).

The signal sequence occupies residues 1–21 (MKVSVLITLAVLGVMFVWASA). The propeptide occupies 22–50 (AELEERGSDQRDSPAWLKSMERIFQSGER). 3 cysteine pairs are disulfide-bonded: C52–C66, C59–C71, and C65–C78. Residues 55–56 (MF) are involved in active face. F84 is modified (phenylalanine amide).

This sequence belongs to the neurotoxin 10 (Hwtx-1) family. 28 (Jztx-11) subfamily. Expressed by the venom gland.

Its subcellular location is the secreted. This toxin acts as a voltage-dependent gating-modifier. It inhibits the sodium conductance (IC(50)=124 nM) and slows the fast inactivation (EC(50)=1180 nM) of Nav1.5/SCN5A. It significantly shifts the activation to more depolarized voltages and decreases the deactivation of Nav1.5 currents upon extreme depolarization, but only slightly affects voltage-dependence of steady-state inactivation. In addition, this toxin causes an approximately five-fold decrease in the rate of recovery from inactivation and an approximately 1.9-fold reduction in the closed-state inactivation rate. This toxin integrates the functions of site 3 toxins (alpha-scorpion toxins) with site 4 toxins (beta-scorpion and spider toxins) by targeting multiple sites on Nav1.5. Also shows inhibition of voltage-gated potassium channels (5 uM completely inhibits Kv2.1/KCNB1, whereas 5 uM moderately inhibits Kv4.2/KCND2 Kv4.1/KCND1 channels). In Chilobrachys guangxiensis (Chinese earth tiger tarantula), this protein is Kappa-theraphotoxin-Cg1a 1.